The chain runs to 393 residues: Acetate kinase (393 aa).

N8 lines the Mg(2+) pocket. K15 is an ATP binding site. Substrate is bound at residue R91. D148 functions as the Proton donor/acceptor in the catalytic mechanism. ATP-binding positions include 206 to 210 (HLGSG), 280 to 282 (DMR), and 325 to 329 (GVGEN). E376 provides a ligand contact to Mg(2+).

This sequence belongs to the acetokinase family. As to quaternary structure, homodimer. It depends on Mg(2+) as a cofactor. Requires Mn(2+) as cofactor.

The protein localises to the cytoplasm. It carries out the reaction acetate + ATP = acetyl phosphate + ADP. The protein operates within metabolic intermediate biosynthesis; acetyl-CoA biosynthesis; acetyl-CoA from acetate: step 1/2. In terms of biological role, catalyzes the formation of acetyl phosphate from acetate and ATP. Can also catalyze the reverse reaction. In Rhizobium meliloti (Ensifer meliloti), this protein is Acetate kinase.